A 215-amino-acid chain; its full sequence is Thymidylate kinase (215 aa).

Glycine 12–serine 19 is an ATP binding site.

This sequence belongs to the thymidylate kinase family.

The catalysed reaction is dTMP + ATP = dTDP + ADP. Phosphorylation of dTMP to form dTDP in both de novo and salvage pathways of dTTP synthesis. This chain is Thymidylate kinase, found in Albidiferax ferrireducens (strain ATCC BAA-621 / DSM 15236 / T118) (Rhodoferax ferrireducens).